The chain runs to 198 residues: ATP-dependent Clp protease proteolytic subunit (198 aa).

Residue Ser98 is the Nucleophile of the active site. His123 is a catalytic residue.

It belongs to the peptidase S14 family. Fourteen ClpP subunits assemble into 2 heptameric rings which stack back to back to give a disk-like structure with a central cavity, resembling the structure of eukaryotic proteasomes.

It is found in the cytoplasm. It catalyses the reaction Hydrolysis of proteins to small peptides in the presence of ATP and magnesium. alpha-casein is the usual test substrate. In the absence of ATP, only oligopeptides shorter than five residues are hydrolyzed (such as succinyl-Leu-Tyr-|-NHMec, and Leu-Tyr-Leu-|-Tyr-Trp, in which cleavage of the -Tyr-|-Leu- and -Tyr-|-Trp bonds also occurs).. Functionally, cleaves peptides in various proteins in a process that requires ATP hydrolysis. Has a chymotrypsin-like activity. Plays a major role in the degradation of misfolded proteins. This Levilactobacillus brevis (strain ATCC 367 / BCRC 12310 / CIP 105137 / JCM 1170 / LMG 11437 / NCIMB 947 / NCTC 947) (Lactobacillus brevis) protein is ATP-dependent Clp protease proteolytic subunit.